Consider the following 206-residue polypeptide: Musculin (206 aa).

Residues 1–115 (MSTGSVSDPE…QSQRNAANAR (115 aa)) are disordered. Acidic residues predominate over residues 46–56 (SAEEEDPDGEE). The Nuclear localization signal signature appears at 71–76 (KRKRPR). Residues 78–92 (AGGGGAGGSAGGGGK) show a composition bias toward gly residues. The segment covering 93 to 102 (KPLPAKGSAA) has biased composition (low complexity). The region spanning 107–159 (SQRNAANARERARMRVLSKAFSRLKTSLPWVPPDTKLSKLDTLRLASSYIAHL) is the bHLH domain.

As to quaternary structure, efficient DNA binding requires dimerization with another bHLH protein. Binds DNA as a homodimer or a heterodimer. Forms a heterodimer with TCF3. Expressed in lymphoid tissues, B-cell lines and activated B-cells.

It is found in the nucleus. Functionally, transcription repressor capable of inhibiting the transactivation capability of TCF3/E47. May play a role in regulating antigen-dependent B-cell differentiation. The polypeptide is Musculin (MSC) (Homo sapiens (Human)).